Here is a 408-residue protein sequence, read N- to C-terminus: Aminomethyltransferase, mitochondrial (408 aa).

The transit peptide at 1–30 (MRGGLWQLGQSITRRLANGGDKKAVARRCF) directs the protein to the mitochondrion. The substrate site is built by E235, R266, and Y404.

The protein belongs to the GcvT family. The glycine cleavage system is composed of four proteins: P, T, L and H.

The protein localises to the mitochondrion. The enzyme catalyses N(6)-[(R)-S(8)-aminomethyldihydrolipoyl]-L-lysyl-[protein] + (6S)-5,6,7,8-tetrahydrofolate = N(6)-[(R)-dihydrolipoyl]-L-lysyl-[protein] + (6R)-5,10-methylene-5,6,7,8-tetrahydrofolate + NH4(+). Functionally, the glycine cleavage system catalyzes the degradation of glycine. The protein is Aminomethyltransferase, mitochondrial (GDCST) of Pisum sativum (Garden pea).